Here is a 161-residue protein sequence, read N- to C-terminus: Phosphopantetheine adenylyltransferase (161 aa).

Substrate is bound at residue Ser-8. ATP contacts are provided by residues 8 to 9 (SF) and His-16. Lys-40, Thr-72, and Arg-86 together coordinate substrate. ATP-binding positions include 87 to 89 (GLR), Glu-97, and 122 to 128 (HSFLSSS).

Belongs to the bacterial CoaD family. In terms of assembly, homohexamer. It depends on Mg(2+) as a cofactor.

It is found in the cytoplasm. It carries out the reaction (R)-4'-phosphopantetheine + ATP + H(+) = 3'-dephospho-CoA + diphosphate. It functions in the pathway cofactor biosynthesis; coenzyme A biosynthesis; CoA from (R)-pantothenate: step 4/5. In terms of biological role, reversibly transfers an adenylyl group from ATP to 4'-phosphopantetheine, yielding dephospho-CoA (dPCoA) and pyrophosphate. The sequence is that of Phosphopantetheine adenylyltransferase from Prochlorococcus marinus (strain SARG / CCMP1375 / SS120).